A 197-amino-acid polypeptide reads, in one-letter code: Holliday junction branch migration complex subunit RuvA (197 aa).

The segment at 1–64 is domain I; sequence MYDYIKGIYK…DDSINLYGFF (64 aa). The interval 65–143 is domain II; the sequence is TEEERDMFNL…NDDIISDIDD (79 aa). Positions 144-154 are flexible linker; that stretch reads LDSISNFQLHS. Positions 154–197 are domain III; that stretch reads SAEALEALMSLGYSQKESEKALKNVDKENSLEDIIKACLKYLMG.

Belongs to the RuvA family. As to quaternary structure, homotetramer. Forms an RuvA(8)-RuvB(12)-Holliday junction (HJ) complex. HJ DNA is sandwiched between 2 RuvA tetramers; dsDNA enters through RuvA and exits via RuvB. An RuvB hexamer assembles on each DNA strand where it exits the tetramer. Each RuvB hexamer is contacted by two RuvA subunits (via domain III) on 2 adjacent RuvB subunits; this complex drives branch migration. In the full resolvosome a probable DNA-RuvA(4)-RuvB(12)-RuvC(2) complex forms which resolves the HJ.

The protein localises to the cytoplasm. The RuvA-RuvB-RuvC complex processes Holliday junction (HJ) DNA during genetic recombination and DNA repair, while the RuvA-RuvB complex plays an important role in the rescue of blocked DNA replication forks via replication fork reversal (RFR). RuvA specifically binds to HJ cruciform DNA, conferring on it an open structure. The RuvB hexamer acts as an ATP-dependent pump, pulling dsDNA into and through the RuvAB complex. HJ branch migration allows RuvC to scan DNA until it finds its consensus sequence, where it cleaves and resolves the cruciform DNA. The protein is Holliday junction branch migration complex subunit RuvA of Clostridium tetani (strain Massachusetts / E88).